Consider the following 185-residue polypeptide: Ribosome-recycling factor (185 aa).

This sequence belongs to the RRF family.

The protein localises to the cytoplasm. Functionally, responsible for the release of ribosomes from messenger RNA at the termination of protein biosynthesis. May increase the efficiency of translation by recycling ribosomes from one round of translation to another. The sequence is that of Ribosome-recycling factor from Geobacter metallireducens (strain ATCC 53774 / DSM 7210 / GS-15).